A 2185-amino-acid polypeptide reads, in one-letter code: Genome polyprotein (2185 aa).

Gly-2 carries N-myristoyl glycine; by host lipidation. At 2 to 1495 (GAQVSTQKTG…HVSRAFICLQ (1494 aa)) the chain is on the cytoplasmic side. An amphipathic alpha-helix region spans residues 566–582 (FYQGPPGEAVERAIARV). Active-site for protease 2A activity residues include His-872 and Asp-890. Positions 907 and 909 each coordinate Zn(2+). Cys-961 (for protease 2A activity) is an active-site residue. Zn(2+) contacts are provided by Cys-967 and His-969. A membrane-binding region spans residues 1101 to 1173 (NNNWLKKFTE…EQSAPSQSDQ (73 aa)). Residues 1101–1239 (NNNWLKKFTE…SPGAGKSVAT (139 aa)) are oligomerization. Positions 1122–1126 (AVKIQ) are RNA-binding. Residues 1205–1361 (EKKMSNYIQF…SMYSQNGKIN (157 aa)) enclose the SF3 helicase domain. Residues Cys-1369, Cys-1381, and Cys-1386 each coordinate Zn(2+). The C4-type; degenerate zinc finger occupies 1369–1386 (CDEECCPVNFKRCCPLVC). Residues 1413-1420 (EYNHRHSV) are RNA-binding. Residues 1424–1429 (LEALFQ) are oligomerization. Residues 1496-1511 (ALTTFVSVAGIIYIIY) lie within the membrane without spanning it. The Cytoplasmic segment spans residues 1512-2185 (KLFAGFQGAY…TLRRKWLDSF (674 aa)). Residue Tyr-1521 is modified to O-(5'-phospho-RNA)-tyrosine. One can recognise a Peptidase C3 domain in the interval 1541–1719 (GPAFEFAVAM…FSAALLKHYF (179 aa)). Active-site for protease 3C activity residues include His-1580, Glu-1611, and Cys-1687. One can recognise a RdRp catalytic domain in the interval 1950–2066 (GHLIAFDYSG…SYPWPIDASL (117 aa)). Positions 1956 and 2052 each coordinate Mg(2+).

The protein belongs to the picornaviruses polyprotein family. Interacts with capsid protein VP1 and capsid protein VP3 to form heterotrimeric protomers. In terms of assembly, interacts with capsid protein VP0, and capsid protein VP3 to form heterotrimeric protomers. Five protomers subsequently associate to form pentamers which serve as building blocks for the capsid. Interacts with capsid protein VP2, capsid protein VP3 and capsid protein VP4 following cleavage of capsid protein VP0. As to quaternary structure, interacts with capsid protein VP1 and capsid protein VP3 in the mature capsid. Interacts with capsid protein VP0 and capsid protein VP1 to form heterotrimeric protomers. Five protomers subsequently associate to form pentamers which serve as building blocks for the capsid. Interacts with capsid protein VP4 in the mature capsid. Interacts with protein 2C; this interaction may be important for virion morphogenesis. In terms of assembly, interacts with capsid protein VP1 and capsid protein VP3. As to quaternary structure, homodimer. Homohexamer; forms a hexameric ring structure with 6-fold symmetry characteristic of AAA+ ATPases. Interacts (via N-terminus) with host RTN3 (via reticulon domain); this interaction is important for viral replication. Interacts with capsid protein VP3; this interaction may be important for virion morphogenesis. In terms of assembly, interacts with protein 3CD. As to quaternary structure, homodimer. Interacts with host GBF1. Interacts (via GOLD domain) with host ACBD3 (via GOLD domain); this interaction allows the formation of a viral protein 3A/ACBD3 heterotetramer with a 2:2 stoichiometry, which will stimulate the recruitment of host PI4KB in order to synthesize PI4P at the viral RNA replication sites. Interacts with RNA-directed RNA polymerase. In terms of assembly, interacts with protein 3AB and with RNA-directed RNA polymerase. As to quaternary structure, interacts with Viral protein genome-linked and with protein 3CD. It depends on Mg(2+) as a cofactor. Specific enzymatic cleavages in vivo by the viral proteases yield processing intermediates and the mature proteins. In terms of processing, myristoylation is required for the formation of pentamers during virus assembly. Further assembly of 12 pentamers and a molecule of genomic RNA generates the provirion. Post-translationally, during virion maturation, immature virions are rendered infectious following cleavage of VP0 into VP4 and VP2. This maturation seems to be an autocatalytic event triggered by the presence of RNA in the capsid and it is followed by a conformational change infectious virion. Myristoylation is required during RNA encapsidation and formation of the mature virus particle. In terms of processing, VPg is uridylylated by the polymerase into VPg-pUpU. This acts as a nucleotide-peptide primer for the genomic RNA replication.

The protein resides in the virion. The protein localises to the host cytoplasm. Its subcellular location is the host cytoplasmic vesicle membrane. It localises to the host nucleus. The enzyme catalyses a ribonucleoside 5'-triphosphate + H2O = a ribonucleoside 5'-diphosphate + phosphate + H(+). It carries out the reaction Selective cleavage of Tyr-|-Gly bond in the picornavirus polyprotein.. The catalysed reaction is RNA(n) + a ribonucleoside 5'-triphosphate = RNA(n+1) + diphosphate. It catalyses the reaction Selective cleavage of Gln-|-Gly bond in the poliovirus polyprotein. In other picornavirus reactions Glu may be substituted for Gln, and Ser or Thr for Gly.. With respect to regulation, replication or transcription is subject to high level of random mutations by the nucleotide analog ribavirin. Its function is as follows. Forms an icosahedral capsid of pseudo T=3 symmetry with capsid proteins VP2 and VP3. The capsid is 300 Angstroms in diameter, composed of 60 copies of each capsid protein and enclosing the viral positive strand RNA genome. Capsid protein VP1 mainly forms the vertices of the capsid. Capsid protein VP1 interacts with host cell receptor to provide virion attachment to target host cells. This attachment induces virion internalization. Tyrosine kinases are probably involved in the entry process. After binding to its receptor, the capsid undergoes conformational changes. Capsid protein VP1 N-terminus (that contains an amphipathic alpha-helix) and capsid protein VP4 are externalized. Together, they shape a pore in the host membrane through which viral genome is translocated to host cell cytoplasm. In terms of biological role, forms an icosahedral capsid of pseudo T=3 symmetry with capsid proteins VP2 and VP3. The capsid is 300 Angstroms in diameter, composed of 60 copies of each capsid protein and enclosing the viral positive strand RNA genome. Lies on the inner surface of the capsid shell. After binding to the host receptor, the capsid undergoes conformational changes. Capsid protein VP4 is released, Capsid protein VP1 N-terminus is externalized, and together, they shape a pore in the host membrane through which the viral genome is translocated into the host cell cytoplasm. Functionally, component of immature procapsids, which is cleaved into capsid proteins VP4 and VP2 after maturation. Allows the capsid to remain inactive before the maturation step. Its function is as follows. Cysteine protease that cleaves viral polyprotein and specific host proteins. It is responsible for the autocatalytic cleavage between the P1 and P2 regions, which is the first cleavage occurring in the polyprotein. Also cleaves the host translation initiation factor EIF4G1, in order to shut down the capped cellular mRNA translation. Inhibits the host nucleus-cytoplasm protein and RNA trafficking by cleaving host members of the nuclear pores. Counteracts stress granule formation probably by antagonizing its assembly or promoting its dissassembly. Cleaves and inhibits host IFIH1/MDA5, thereby inhibiting the type-I IFN production and the establishment of the antiviral state. Cleaves and inhibits host MAVS, thereby inhibiting the type-I IFN production and the establishment of the antiviral state. In terms of biological role, plays an essential role in the virus replication cycle by acting as a viroporin. Creates a pore in the host endoplasmic reticulum and as a consequence releases Ca2+ in the cytoplasm of infected cell. In turn, high levels of cytoplasmic calcium may trigger membrane trafficking and transport of viral ER-associated proteins to viroplasms, sites of viral genome replication. Induces and associates with structural rearrangements of intracellular membranes. Displays RNA-binding, nucleotide binding and NTPase activities. May play a role in virion morphogenesis and viral RNA encapsidation by interacting with the capsid protein VP3. Functionally, localizes the viral replication complex to the surface of membranous vesicles. Together with protein 3CD binds the Cis-Active RNA Element (CRE) which is involved in RNA synthesis initiation. Acts as a cofactor to stimulate the activity of 3D polymerase, maybe through a nucleid acid chaperone activity. Its function is as follows. Localizes the viral replication complex to the surface of membranous vesicles. It inhibits host cell endoplasmic reticulum-to-Golgi apparatus transport and causes the disassembly of the Golgi complex, possibly through GBF1 interaction. This would result in depletion of MHC, trail receptors and IFN receptors at the host cell surface. Plays an essential role in viral RNA replication by recruiting ACBD3 and PI4KB at the viral replication sites, thereby allowing the formation of the rearranged membranous structures where viral replication takes place. In terms of biological role, acts as a primer for viral RNA replication and remains covalently bound to viral genomic RNA. VPg is uridylylated prior to priming replication into VPg-pUpU. The oriI viral genomic sequence may act as a template for this. The VPg-pUpU is then used as primer on the genomic RNA poly(A) by the RNA-dependent RNA polymerase to replicate the viral genome. During genome replication, the VPg-RNA linkage is removed by the host TDP2, thereby accelerating replication. During the late stage of the replication cycle, host TDP2 is excluded from sites of viral RNA synthesis and encapsidation, allowing for the generation of progeny virions. Involved in the viral replication complex and viral polypeptide maturation. It exhibits protease activity with a specificity and catalytic efficiency that is different from protease 3C. Protein 3CD lacks polymerase activity. Protein 3CD binds to the 5'UTR of the viral genome. Functionally, replicates the viral genomic RNA on the surface of intracellular membranes. May form linear arrays of subunits that propagate along a strong head-to-tail interaction called interface-I. Covalently attaches UMP to a tyrosine of VPg, which is used to prime RNA synthesis. The positive stranded RNA genome is first replicated at virus induced membranous vesicles, creating a dsRNA genomic replication form. This dsRNA is then used as template to synthesize positive stranded RNA genomes. ss(+)RNA genomes are either translated, replicated or encapsidated. Its function is as follows. Major viral protease that mediates proteolytic processing of the polyprotein. Cleaves host EIF5B, contributing to host translation shutoff. Also cleaves host PABPC1, contributing to host translation shutoff. Cleaves host NLRP1, triggers host N-glycine-mediated degradation of the autoinhibitory NLRP1 N-terminal fragment. This is Genome polyprotein from Homo sapiens (Human).